A 365-amino-acid polypeptide reads, in one-letter code: Galactoside alpha-(1,2)-fucosyltransferase 1 (365 aa).

The Cytoplasmic segment spans residues M1–Q8. The helical; Signal-anchor for type II membrane protein transmembrane segment at L9–L25 threads the bilayer. Residues H26–P365 lie on the Lumenal side of the membrane. N-linked (GlcNAc...) asparagine glycosylation is found at N65 and N327.

The protein belongs to the glycosyltransferase 11 family.

Its subcellular location is the golgi apparatus. The protein resides in the golgi stack membrane. The catalysed reaction is a beta-D-galactosyl-(1-&gt;4)-N-acetyl-beta-D-glucosaminyl derivative + GDP-beta-L-fucose = an alpha-L-Fuc-(1-&gt;2)-beta-D-Gal-(1-&gt;4)-beta-D-GlcNAc derivative + GDP + H(+). The enzyme catalyses a ganglioside GA1 + GDP-beta-L-fucose = a ganglioside Fuc-GA1 + GDP + H(+). It catalyses the reaction a beta-D-Gal-(1-&gt;3)-beta-D-GlcNAc-(1-&gt;3)-beta-D-Gal-(1-&gt;4)-beta-D-Glc-(1&lt;-&gt;1')-Cer(d18:1(4E)) + GDP-beta-L-fucose = alpha-L-fucosyl-(1-&gt;2)- beta-D-galactosyl-(1-&gt;3)-N-acetyl-beta-D-glucosaminyl-(1-&gt;3)-beta-D-galactosyl-(1-&gt;4)-beta-D-glucosyl-(1&lt;-&gt;1')-N-acylsphing-4-enine + GDP + H(+). It carries out the reaction a neolactoside nLc4Cer(d18:1(4E)) + GDP-beta-L-fucose = a neolactoside IV(2)-alpha-Fuc-nLc4Cer(d18:1(4E)) + GDP + H(+). The catalysed reaction is a ganglioside GM1 + GDP-beta-L-fucose = a ganglioside Fuc-GM1 + GDP + H(+). The enzyme catalyses beta-D-galactosyl-(1-&gt;3)-N-acetyl-D-galactosamine + GDP-beta-L-fucose = alpha-L-fucosyl-(1-&gt;2)-beta-D-galactosyl-(1-&gt;3)-N-acetyl-D-galactosamine + GDP + H(+). It functions in the pathway protein modification; protein glycosylation. In terms of biological role, catalyzes the transfer of L-fucose, from a guanosine diphosphate-beta-L-fucose, to the terminal galactose residue of glycoconjugates through an alpha(1,2) linkage leading to H antigen synthesis that is an intermediate substrate in the synthesis of ABO blood group antigens. H antigen is essential for maturation of the glomerular layer of the main olfactory bulb, in cell migration and early cell-cell contacts during tumor associated angiogenesis. Preferentially fucosylates soluble lactose and to a lesser extent fucosylates glycolipids gangliosides GA1 and GM1a. In Homo sapiens (Human), this protein is Galactoside alpha-(1,2)-fucosyltransferase 1.